The chain runs to 911 residues: General transcription factor 3C polypeptide 2 (911 aa).

2 disordered regions span residues 34-187 (LDVK…RRRA) and 205-297 (ALPA…MAPN). The segment covering 35–46 (DVKTSSEMTSAE) has biased composition (polar residues). Phosphoserine is present on Ser-63. Residues 64–81 (PDQRRLPPEQESLSRLEQ) are compositionally biased toward basic and acidic residues. Residues 92–112 (SKPRASKPGRKRGGRTRKGPK) are compositionally biased toward basic residues. Residues 114–123 (PQQPNPPSAP) show a composition bias toward pro residues. Ser-132, Ser-165, Ser-167, Ser-220, and Ser-260 each carry phosphoserine. Residues 253–262 (EAEDVEESEG) are compositionally biased toward acidic residues. Residues 263–275 (PSESSSEPEPAVP) are compositionally biased toward low complexity. WD repeat units follow at residues 465–521 (CDNG…ALLA) and 552–593 (SECG…PLQR). Position 597 is a phosphoserine (Ser-597). The WD 3 repeat unit spans residues 611-651 (AHDQAVRTLQWCKANSHFLASAGSDRKIKFWDLRRPYEPIN). The disordered stretch occupies residues 765 to 785 (SPEGPDHSSASSGVPNPPKAR). Residues 832-874 (LQLEAIHKVRFSPNLDSYGWLVSGGQSGLVRIHFVRGLASPLG) form a WD 4 repeat. Phosphoserine occurs at positions 871, 892, and 893. Residues 889–911 (FQPSSPTRRPGFSPTSHRLLPTP) are disordered. Residue Thr-895 is modified to Phosphothreonine. Ser-901 carries the post-translational modification Phosphoserine.

In terms of assembly, part of the TFIIIC subcomplex TFIIIC2, consisting of six subunits, GTF3C1, GTF3C2, GTF3C3, GTF3C4, GTF3C5 and GTF3C6.

The protein localises to the nucleus. Its function is as follows. Required for RNA polymerase III-mediated transcription. Component of TFIIIC that initiates transcription complex assembly on tRNA and is required for transcription of 5S rRNA and other stable nuclear and cytoplasmic RNAs. May play a direct role in stabilizing interactions of TFIIIC2 with TFIIIC1. This Pongo abelii (Sumatran orangutan) protein is General transcription factor 3C polypeptide 2 (GTF3C2).